Reading from the N-terminus, the 2285-residue chain is AT-rich interactive domain-containing protein 1A (2285 aa).

Positions 1–14 (MAAQVAPAAASSLG) are enriched in low complexity. 2 disordered regions span residues 1 to 820 (MAAQ…ALPN) and 978 to 1005 (ATKM…TTTN). Position 2 is an N-acetylalanine (alanine 2). Over residues 23–35 (ELKKAEQQQREEA) the composition is skewed to basic and acidic residues. Phosphoserine occurs at positions 58 and 79. 2 stretches are compositionally biased toward gly residues: residues 79 to 95 (SNGG…GGPG) and 121 to 130 (PGGGGGGSSD). Composition is skewed to low complexity over residues 131-142 (GVGAPPHSAAAA), 212-221 (YNSYYPNRSA), and 228-265 (AYAL…SSSS). Serine 233 carries the phosphoserine modification. Residues 273–286 (AMGGGGPSAAGGGT) show a composition bias toward gly residues. The residue at position 286 (threonine 286) is a Phosphothreonine. Residues 295-299 (LNQLL) carry the LXXLL motif. The span at 295–306 (LNQLLTSPSSAR) shows a compositional bias: polar residues. Position 301 is a phosphoserine (serine 301). Residues 310–327 (GYPGGDYSGGPQDGGAGK) are compositionally biased toward gly residues. The segment covering 338 to 353 (GAAAAAAAAAAASGGA) has biased composition (low complexity). Phosphoserine is present on residues serine 363 and serine 382. Over residues 400–425 (PYSQQQGPPSGPQQGHGYPGQPYGSQ) the composition is skewed to low complexity. An Asymmetric dimethylarginine modification is found at arginine 429. 3 stretches are compositionally biased toward low complexity: residues 447–457 (YTQQIPPYGQQ), 465–546 (QGQT…QHPQ), and 553–595 (QPQA…YSQQ). Serine 604 carries the phosphoserine modification. Residues 610 to 621 (SQASSAPSMTSS) show a composition bias toward low complexity. A compositionally biased stretch (polar residues) spans 628–637 (MNLSLQSRPS). Residues 658 to 674 (SPGVSTSGISSSQGEQS) are compositionally biased toward low complexity. A compositionally biased stretch (polar residues) spans 675–685 (NPAQSPFSPHT). Phosphoserine occurs at positions 696, 698, 702, 730, 764, and 772. Composition is skewed to polar residues over residues 730-747 (SGQS…SSIA) and 755-793 (RNPQ…QNSM). Residues 797–807 (GPQGGQYGPQG) show a composition bias toward gly residues. Residues 808–820 (GYPRQPNYNALPN) show a composition bias toward low complexity. The region spanning 1017 to 1108 (EPERKMWVDR…CLYAFECKIE (92 aa)) is the ARID domain. Disordered regions lie at residues 1113-1483 (PPPD…MMGG) and 1539-1603 (ANHE…SPSK). Low complexity predominate over residues 1141 to 1154 (MQGPQTPQSTSSSM). Residues 1162 to 1177 (PPTPASTPHSQIPPLP) are compositionally biased toward pro residues. Serine 1184 carries the phosphoserine modification. Residues 1194-1219 (GSDSTFQKRNSMTPNPGYQPSMNTSD) show a composition bias toward polar residues. Phosphoserine is present on serine 1235. Arginine 1276 carries the post-translational modification Omega-N-methylarginine. Polar residues-rich tracts occupy residues 1299–1315 (NMST…SNPD) and 1339–1356 (YGNQ…PFPS). Positions 1357-1367 (QQTTMYQQQQQ) are enriched in low complexity. The short motif at 1368–1387 (NYKRPMDGTYGPPAKRHEGE) is the Nuclear localization signal element. Low complexity predominate over residues 1396–1425 (GQGQPQQQQLPPAQPQPASQQQAAQPSPQQ). Polar residues predominate over residues 1468 to 1477 (PGTNAQQNMP). The segment covering 1554 to 1577 (PYGPSAPVPPMTRPPPSNYQPPPS) has biased composition (pro residues). Serine 1604 carries the post-translational modification Phosphoserine. Position 1612 is an N6-acetyllysine (lysine 1612). The LXXLL signature appears at 1709–1713 (LPGLL). 2 disordered regions span residues 1747 to 1774 (PGRF…PKLE) and 1859 to 1907 (FESK…EKRI). Phosphoserine occurs at positions 1751 and 1754. Residues 1761–1774 (GGEEEEELLGPKLE) are compositionally biased toward acidic residues. Over residues 1886–1895 (EGTPGTTDQE) the composition is skewed to low complexity. Position 1888 is a phosphothreonine (threonine 1888). The residue at position 1905 (lysine 1905) is an N6-acetyllysine. Phosphoserine occurs at positions 1929 and 1944. Short sequence motifs (LXXLL) lie at residues 1967–1971 (LCTLL) and 2085–2089 (LDGLL).

As to quaternary structure, component of SWI/SNF chromatin remodeling complexes, in some of which it can be mutually exclusive with ARID1B/BAF250B. The canonical complex contains a catalytic subunit (either SMARCA4/BRG1/BAF190A or SMARCA2/BRM/BAF190B) and at least SMARCE1, ACTL6A/BAF53, SMARCC1/BAF155, SMARCC2/BAF170, and SMARCB1/SNF5/BAF47. Other subunits specific to each of the complexes may also be present permitting several possible combinations developmentally and tissue specific. Component of the BAF (SWI/SNF-A) complex, which includes at least actin (ACTB), ARID1A/BAF250A, ARID1B/BAF250B, SMARCA2/BRM, SMARCA4/BRG1/BAF190A, ACTL6A/BAF53, ACTL6B/BAF53B, SMARCE1/BAF57, SMARCC1/BAF155, SMARCC2/BAF170, SMARCB1/SNF5/INI1, and one or more SMARCD1/BAF60A, SMARCD2/BAF60B, or SMARCD3/BAF60C. In muscle cells, the BAF complex also contains DPF3. Component of neural progenitors-specific chromatin remodeling complex (npBAF complex) composed of at least, ARID1A/BAF250A or ARID1B/BAF250B, SMARCD1/BAF60A, SMARCD3/BAF60C, SMARCA2/BRM/BAF190B, SMARCA4/BRG1/BAF190A, SMARCB1/BAF47, SMARCC1/BAF155, SMARCE1/BAF57, SMARCC2/BAF170, PHF10/BAF45A, ACTL6A/BAF53A and actin. Component of neuron-specific chromatin remodeling complex (nBAF complex) composed of at least, ARID1A/BAF250A or ARID1B/BAF250B, SMARCD1/BAF60A, SMARCD3/BAF60C, SMARCA2/BRM/BAF190B, SMARCA4/BRG1/BAF190A, SMARCB1/BAF47, SMARCC1/BAF155, SMARCE1/BAF57, SMARCC2/BAF170, DPF1/BAF45B, DPF3/BAF45C, ACTL6B/BAF53B and actin. Component of a SWI/SNF-like EBAFa complex, at least composed of SMARCA4/BRG1/BAF190A, SMARCB1/BAF47/SNF5, ACTL6A/BAF53A, SMARCE1/BAF57, SMARCD1/BAF60A, SMARCC1/BAF155, SMARCC2/BAF170, BAF250A and MLLT1/ENL. Interacts through its C-terminus with SMARCA2/BRM/BAF190B and SMARCA4/BRG1/BAF190A. Interacts with SMARCC1/BAF155. Interacts with FOS, FOSB isoform 1 and 2, FOSL1 and FOSL2. As to expression, highly expressed in spleen, thymus, prostate, testis, ovary, small intestine, colon, and PBL, and at a much lower level in heart, brain, placenta, lung, liver, skeletal muscle, kidney, and pancreas.

Its subcellular location is the nucleus. Functionally, involved in transcriptional activation and repression of select genes by chromatin remodeling (alteration of DNA-nucleosome topology). Component of SWI/SNF chromatin remodeling complexes that carry out key enzymatic activities, changing chromatin structure by altering DNA-histone contacts within a nucleosome in an ATP-dependent manner. Binds DNA non-specifically. Belongs to the neural progenitors-specific chromatin remodeling complex (npBAF complex) and the neuron-specific chromatin remodeling complex (nBAF complex). During neural development a switch from a stem/progenitor to a postmitotic chromatin remodeling mechanism occurs as neurons exit the cell cycle and become committed to their adult state. The transition from proliferating neural stem/progenitor cells to postmitotic neurons requires a switch in subunit composition of the npBAF and nBAF complexes. As neural progenitors exit mitosis and differentiate into neurons, npBAF complexes which contain ACTL6A/BAF53A and PHF10/BAF45A, are exchanged for homologous alternative ACTL6B/BAF53B and DPF1/BAF45B or DPF3/BAF45C subunits in neuron-specific complexes (nBAF). The npBAF complex is essential for the self-renewal/proliferative capacity of the multipotent neural stem cells. The nBAF complex along with CREST plays a role regulating the activity of genes essential for dendrite growth. This chain is AT-rich interactive domain-containing protein 1A (ARID1A), found in Homo sapiens (Human).